The sequence spans 525 residues: Transmembrane protein 184C (525 aa).

A run of 7 helical transmembrane segments spans residues 17–37 (LLVLFYATTILVAVPICIWKF), 48–68 (SWFIAGIFLLLTIPVSLWGIL), 83–103 (IIRILWMVPIYSVDSWVALVY), 121–141 (VIYNFMIFLTNYLTIRFPNLI), 212–232 (YLVILNNLSQLFAMYCLLLFY), 254–274 (VVFVSFWQAVLIALLVKLGVI), and 287–307 (AVATGLQDFIICIEMFFAAIA). Disordered regions lie at residues 358 to 394 (PKKKCFPGDPDHNEHSSLLSSSSQDLTSGSSKVPSPG) and 483 to 525 (LFPS…STDP). Over residues 373–388 (SSLLSSSSQDLTSGSS) the composition is skewed to low complexity. Residues 483-502 (LFPSTETSENSMIDTSESQQ) show a composition bias toward polar residues. The segment covering 503–525 (ESSDLCTESSDSSTESSDLSTDP) has biased composition (low complexity).

This sequence belongs to the TMEM184 family.

Its subcellular location is the membrane. In terms of biological role, possible tumor suppressor which may play a role in cell growth. The sequence is that of Transmembrane protein 184C (Tmem184c) from Mus musculus (Mouse).